A 264-amino-acid chain; its full sequence is Tryptophan synthase alpha chain (264 aa).

Residues Glu-49 and Asp-60 each act as proton acceptor in the active site.

This sequence belongs to the TrpA family. In terms of assembly, tetramer of two alpha and two beta chains.

It carries out the reaction (1S,2R)-1-C-(indol-3-yl)glycerol 3-phosphate + L-serine = D-glyceraldehyde 3-phosphate + L-tryptophan + H2O. It functions in the pathway amino-acid biosynthesis; L-tryptophan biosynthesis; L-tryptophan from chorismate: step 5/5. In terms of biological role, the alpha subunit is responsible for the aldol cleavage of indoleglycerol phosphate to indole and glyceraldehyde 3-phosphate. The protein is Tryptophan synthase alpha chain of Microcystis aeruginosa (strain NIES-843 / IAM M-2473).